The following is a 442-amino-acid chain: Transforming growth factor beta-2 proprotein (442 aa).

An N-terminal signal peptide occupies residues methionine 1–serine 20. N-linked (GlcNAc...) asparagine glycosylation is found at asparagine 72, asparagine 168, and asparagine 269. Disulfide bonds link cysteine 337-cysteine 346, cysteine 345-cysteine 408, cysteine 374-cysteine 439, and cysteine 378-cysteine 441.

It belongs to the TGF-beta family. As to quaternary structure, interacts with the serine proteases, HTRA1 and HTRA3. Interacts with ASPN. Interacts with MFAP5. In terms of assembly, interacts with Transforming growth factor beta-2 (TGF-beta-2) chain; interaction is non-covalent and maintains (TGF-beta-2) in a latent state. Interacts with LRRC32/GARP; leading to regulate activation of TGF-beta-2. Interacts with NREP; the interaction results in a decrease in TGFB2 autoinduction. Transforming growth factor beta-2: Homodimer; disulfide-linked. Transforming growth factor beta-2: Interacts with TGF-beta receptors (TGFBR1 and TGFBR2), leading to signal transduction. In terms of processing, the precursor proprotein is cleaved in the Golgi apparatus to form Transforming growth factor beta-2 (TGF-beta-2) and Latency-associated peptide (LAP) chains, which remain non-covalently linked, rendering TGF-beta-2 inactive. In terms of tissue distribution, expressed in cardiomyocytes. Expressed in the aorta, primary bronchus, uterus, heart, skeletal muscle, sciatic nerve and spinal cord but not in the intestine.

The protein localises to the secreted. The protein resides in the extracellular space. It localises to the extracellular matrix. Functionally, precursor of the Latency-associated peptide (LAP) and Transforming growth factor beta-2 (TGF-beta-2) chains, which constitute the regulatory and active subunit of TGF-beta-2, respectively. Required to maintain the Transforming growth factor beta-2 (TGF-beta-2) chain in a latent state during storage in extracellular matrix. Associates non-covalently with TGF-beta-2 and regulates its activation via interaction with 'milieu molecules', such as LTBP1 and LRRC32/GARP, that control activation of TGF-beta-2. Its function is as follows. Multifunctional protein that regulates various processes such as angiogenesis and heart development. Activation into mature form follows different steps: following cleavage of the proprotein in the Golgi apparatus, Latency-associated peptide (LAP) and Transforming growth factor beta-2 (TGF-beta-2) chains remain non-covalently linked rendering TGF-beta-2 inactive during storage in extracellular matrix. At the same time, LAP chain interacts with 'milieu molecules', such as LTBP1 and LRRC32/GARP, that control activation of TGF-beta-2 and maintain it in a latent state during storage in extracellular milieus. Once activated following release of LAP, TGF-beta-2 acts by binding to TGF-beta receptors (TGFBR1 and TGFBR2), which transduce signal. This chain is Transforming growth factor beta-2 proprotein (Tgfb2), found in Rattus norvegicus (Rat).